Here is a 607-residue protein sequence, read N- to C-terminus: CUB and zona pellucida-like domain-containing protein 1 (607 aa).

Residues 1–19 form the signal peptide; the sequence is MEVTGRLFIWAILAVSCGA. C17 and C58 are disulfide-bonded. 2 CUB domains span residues 20-146 and 154-265; these read QLNS…YFFS and CGGD…YTSI. Residues 20–568 are Lumenal-facing; the sequence is QLNSTEAEGK…AEISNQPLSR (549 aa). N-linked (GlcNAc...) asparagine glycans are attached at residues N22, N57, and N67. Intrachain disulfides connect C85-C107, C154-C180, and C207-C229. Positions 276-519 constitute a ZP domain; that stretch reads SCVSDKMRVI…SRCNQGCVPR (244 aa). Residue N419 is glycosylated (N-linked (GlcNAc...) asparagine). C442 and C498 are disulfide-bonded. A helical membrane pass occupies residues 569–589; sequence LYLFSFMVLALNVVIVAITTV. The Cytoplasmic portion of the chain corresponds to 590–607; that stretch reads KHFLNRWMDHRYQKLQVY.

As to expression, highly expressed in pancreatic acinar cells. Also expressed in epithelium of the uterus during late pregnancy but not detected in non-pregnant uterus or in a variety of other adult and fetal tissues.

Its subcellular location is the zymogen granule membrane. Functionally, localized to zymogen granules, where it functions in trypsinogen activation. May indirectly regulate cell motility, cell-cell and cell/extracellular matrix interactions. The chain is CUB and zona pellucida-like domain-containing protein 1 from Mus musculus (Mouse).